An 82-amino-acid chain; its full sequence is Small ribosomal subunit protein bS16 (82 aa).

The protein belongs to the bacterial ribosomal protein bS16 family.

The polypeptide is Small ribosomal subunit protein bS16 (Mannheimia succiniciproducens (strain KCTC 0769BP / MBEL55E)).